Reading from the N-terminus, the 372-residue chain is Cytochrome b (372 aa).

The next 4 membrane-spanning stretches (helical) occupy residues F25 to I45, W69 to I90, W105 to L125, and F170 to M190. Heme b contacts are provided by H75 and H89. Heme b is bound by residues H174 and H188. H193 contributes to the a ubiquinone binding site. 4 consecutive transmembrane segments (helical) span residues Y218 to F238, L280 to H300, M312 to T332, and F339 to P358.

It belongs to the cytochrome b family. As to quaternary structure, the cytochrome bc1 complex contains 3 respiratory subunits (MT-CYB, CYC1 and UQCRFS1), 2 core proteins (UQCRC1 and UQCRC2) and probably 6 low-molecular weight proteins. Requires heme b as cofactor.

It localises to the mitochondrion inner membrane. Functionally, component of the ubiquinol-cytochrome c reductase complex (complex III or cytochrome b-c1 complex) that is part of the mitochondrial respiratory chain. The b-c1 complex mediates electron transfer from ubiquinol to cytochrome c. Contributes to the generation of a proton gradient across the mitochondrial membrane that is then used for ATP synthesis. The sequence is that of Cytochrome b (MT-CYB) from Heterodon simus (Southern hognose snake).